We begin with the raw amino-acid sequence, 311 residues long: Pyrimidine-specific ribonucleoside hydrolase RihA (311 aa).

Residue His-240 is part of the active site.

This sequence belongs to the IUNH family. RihA subfamily.

Hydrolyzes cytidine or uridine to ribose and cytosine or uracil, respectively. The polypeptide is Pyrimidine-specific ribonucleoside hydrolase RihA (Klebsiella pneumoniae (strain 342)).